The sequence spans 464 residues: MAAQPPRPVGERSMGSSREAARAPARSPAWASTQASTPGAALAVQRESPESGLQKHYSNLCMEKSQKINPFILHILQEVDEEIKKGLAAGITLNIAGNNRLVPVERVTGEDFWILSKILKNCLYINGLDVGYNLLCDVGAYYAAKLLQKQLNLIYLNLMFNDIGPEGGELIAKVLHKNRTLKYLRMTGNKIENKGGMFFAAMLQINSSLEKLDLGDCDLGMQSVIAFATVLTQNQAIKAINLNRPILYSEQEESTVHVGRMLKENHCLVALHMCKHDIKNSGIQQLCDALYLNSSLRYLDVSCNKITHDGMVYLADVLKSNTTLEVIDLSFNRIENAGANYLSETLTSHNRSLKALSVVSNNIEGEGLVALSQSMKTNLTFSHIYIWGNKFDEATCIAYSDLIQMGCLKPDNTDVEPFVVDGRVYLAEVSNGLKKHYYWTSTYGESYDHSSNAGFALVPVGQQP.

A disordered region spans residues 1 to 48 (MAAQPPRPVGERSMGSSREAARAPARSPAWASTQASTPGAALAVQRES). The span at 16–32 (SSREAARAPARSPAWAS) shows a compositional bias: low complexity. 2 LRR repeats span residues 295 to 315 (SLRY…VYLA) and 323 to 345 (TLEV…LSET).

Interacts with NPM1 and NCL.

The protein resides in the nucleus. It localises to the nucleolus. The protein localises to the cytoplasm. Its function is as follows. Highly expressed in stem cells where it may be involved in regulation of pluripotency. In embryonic stem cells (ESCs), important for normal expression of the pluripotency regulators POU5F1/OCT4 and KLF4. Also important for expression of the ectodermal marker gene NES and the endodermal marker gene GATA4. Promotes stem cell proliferation in vitro. In Homo sapiens (Human), this protein is Leucine-rich repeat-containing protein 34 (LRRC34).